Consider the following 667-residue polypeptide: WD repeat-containing protein 48 homolog (667 aa).

WD repeat units follow at residues 26–65 (QHRN…NEKY), 71–110 (HHND…CMST), 113–152 (THRD…ALTA), 164–203 (GSKD…RSMK), 206–245 (GHTE…CVQT), 248–287 (VHKE…NKML), 290–329 (EEQA…RCTL), and 350–389 (KGGA…KKEQ). The disordered stretch occupies residues 591–615 (ETTPSGGNANNSLQNSQSDANSEGS).

It belongs to the WD repeat WDR48 family. In terms of assembly, catalytic component of the Usp12-46 deubiquitylase complex consisting of Usp12-46, Wdr20 and Uaf1; regulatory subunit that, together wtih Wdr20, stabilizes Usp12-46. The Usp12-46 deubiquitylase complex associates with arr/arrow; the interaction leads to deubiquitination and stabilization of arr/arrow.

Regulatory component of the Usp12-46 deubiquitylase complex. activates deubiquitination by increasing the catalytic turnover without increasing the affinity of deubiquitinating enzymes for the substrate. The complex deubiquitylates the wg/wingless-signaling receptor arr/arrow, which stabilizes the receptor and increases its concentration at the cell surface; this enhances the sensitivity of cells to wg/wingless-signal stimulation. This increases the amplitude and spatial range of the signaling response to the wg/wingless morphogen gradient, facilitating the precise concentration-dependent regulation of its target genes. Together with Wdr20 and Usp12-46 required for wg/wingless-mediated signaling in the wing imaginal disc and for wg/wingless-dependent regulation of intestinal stem cell proliferation. The sequence is that of WD repeat-containing protein 48 homolog from Drosophila ananassae (Fruit fly).